A 173-amino-acid polypeptide reads, in one-letter code: NADH-quinone oxidoreductase subunit B (173 aa).

[4Fe-4S] cluster contacts are provided by Cys46, Cys47, Cys112, and Cys142.

It belongs to the complex I 20 kDa subunit family. In terms of assembly, NDH-1 is composed of 14 different subunits. Subunits NuoB, C, D, E, F, and G constitute the peripheral sector of the complex. The cofactor is [4Fe-4S] cluster.

It is found in the cell membrane. It catalyses the reaction a quinone + NADH + 5 H(+)(in) = a quinol + NAD(+) + 4 H(+)(out). Functionally, NDH-1 shuttles electrons from NADH, via FMN and iron-sulfur (Fe-S) centers, to quinones in the respiratory chain. The immediate electron acceptor for the enzyme in this species is believed to be a menaquinone. Couples the redox reaction to proton translocation (for every two electrons transferred, four hydrogen ions are translocated across the cytoplasmic membrane), and thus conserves the redox energy in a proton gradient. This chain is NADH-quinone oxidoreductase subunit B, found in Desulfitobacterium hafniense (strain DSM 10664 / DCB-2).